Consider the following 476-residue polypeptide: Ribulose bisphosphate carboxylase large chain (476 aa).

Substrate-binding residues include Asn-124 and Thr-174. The Proton acceptor role is filled by Lys-176. Substrate is bound at residue Lys-178. Mg(2+) contacts are provided by Lys-202, Asp-204, and Glu-205. Position 202 is an N6-carboxylysine (Lys-202). Catalysis depends on His-295, which acts as the Proton acceptor. 3 residues coordinate substrate: Arg-296, His-328, and Ser-380.

Belongs to the RuBisCO large chain family. Type I subfamily. Heterohexadecamer of 8 large chains and 8 small chains; disulfide-linked. The disulfide link is formed within the large subunit homodimers. Mg(2+) serves as cofactor. The disulfide bond which can form in the large chain dimeric partners within the hexadecamer appears to be associated with oxidative stress and protein turnover.

The protein resides in the carboxysome. The enzyme catalyses 2 (2R)-3-phosphoglycerate + 2 H(+) = D-ribulose 1,5-bisphosphate + CO2 + H2O. The catalysed reaction is D-ribulose 1,5-bisphosphate + O2 = 2-phosphoglycolate + (2R)-3-phosphoglycerate + 2 H(+). Functionally, ruBisCO catalyzes two reactions: the carboxylation of D-ribulose 1,5-bisphosphate, the primary event in carbon dioxide fixation, as well as the oxidative fragmentation of the pentose substrate in the photorespiration process. Both reactions occur simultaneously and in competition at the same active site. The sequence is that of Ribulose bisphosphate carboxylase large chain from Cyanothece sp. (strain PCC 7425 / ATCC 29141).